Reading from the N-terminus, the 235-residue chain is TVP38/TMEM64 family inner membrane protein YdjZ (235 aa).

Topologically, residues 1 to 13 (MMMMQSRKIWYYR) are periplasmic. A helical membrane pass occupies residues 14–34 (ITLIILLFAMLLAWALLPGVH). Topologically, residues 35-64 (EFINRSVAAFAAVDQQGIERFIQSYGALAA) are cytoplasmic. The chain crosses the membrane as a helical span at residues 65–85 (VVSFLLMILQAIAAPLPAFLI). The Periplasmic portion of the chain corresponds to 86 to 95 (TFANASLFGA). The tract at residues 90-199 (ASLFGAFWGG…IVYSWAGSML (110 aa)) is VTT domain. Residues 96-116 (FWGGLLSWTSSMAGAALCFFI) form a helical membrane-spanning segment. The Cytoplasmic portion of the chain corresponds to 117–176 (ARVMGREVVEKLTGKTVLDSMDGFFTRYGKHTILVCRLLPFVPFDPISYAAGLTSIRFRS). The helical transmembrane segment at 177 to 197 (FFIATGLGQLPATIVYSWAGS) threads the bilayer. Over 198–202 (MLTGG) the chain is Periplasmic. The chain crosses the membrane as a helical span at residues 203–223 (TFWFVTGLFILFALTVVIFMA). The Cytoplasmic segment spans residues 224–235 (KKIWLERQKRNA).

Belongs to the TVP38/TMEM64 family.

It is found in the cell inner membrane. This Escherichia coli (strain K12) protein is TVP38/TMEM64 family inner membrane protein YdjZ (ydjZ).